A 462-amino-acid polypeptide reads, in one-letter code: MTSLISITLDELLINEDINDDYTCCVCECLLIEALQCRNGHVACKNCFIKIVKSKKECMTCRCEIKSIESLSKNRYLEKEIRKLNINCPNSFLKRELNLNNNNKNGNGNEGSSANEIEQPQQPQQQQPQELIKDINNGCKEILTIDQLDSHLKQCEYRFLKCTNLYANDLCSELDICGYDYRYNQSEKHRDECPYGIIGCTLCGKDCSRVDIESHTENHCPKLLVKCPTCNQDQLIARCDLDDHLSVDCAMIEIDCILKESGCKERVKRNQLANHLSSDNHLLFINNQFNQQNDIINQLKLELSHCNDLNEILTAKLDRYNNDNTMFRGKWVISNWTDKLNQYPPKKYLSLDFNLSQNKPFSIRVYPNGSSVMWHNCTISLVKLYQTESTIKFSFEIENEDPLKNDLQTKTDIFKGLNDSWSLQFFKVCDQANNNGFIINDTLTINFSIKIKKCFENIFITE.

Residues 24-62 form an RING-type; degenerate zinc finger; that stretch reads CCVCECLLIEALQCRNGHVACKNCFIKIVKSKKECMTCR. The tract at residues 104–127 is disordered; the sequence is KNGNGNEGSSANEIEQPQQPQQQQ. TRAF-type zinc fingers lie at residues 150 to 217 and 214 to 273; these read SHLK…SHTE and SHTE…NQLA. One can recognise an MATH domain in the interval 326 to 449; that stretch reads MFRGKWVISN…NDTLTINFSI (124 aa).

This sequence belongs to the TNF receptor-associated factor family. A subfamily.

Its subcellular location is the cytoplasm. Functionally, probable adapter protein and signal transducer that links members of the tumor necrosis factor receptor family to different signaling pathways by association with the receptor cytoplasmic domain and kinases. This is TNF receptor-associated factor family protein DDB_G0267754 from Dictyostelium discoideum (Social amoeba).